Reading from the N-terminus, the 142-residue chain is MNIIDRFEQENISKLIENKKIPDFKAGDTVKVTVKIVDRSVEKDGKEKLTERFQAYEGVVIAKRNRGITSSFLVRKISHGEGVERRFMTYSPVVHAIDVVKYGVVRRAKLYYLRERSGKSARIKERHMHIAKKPKAKVAEAV.

The protein belongs to the bacterial ribosomal protein bL19 family.

In terms of biological role, this protein is located at the 30S-50S ribosomal subunit interface and may play a role in the structure and function of the aminoacyl-tRNA binding site. The chain is Large ribosomal subunit protein bL19 from Rickettsia bellii (strain OSU 85-389).